The sequence spans 359 residues: 4-galactosyl-N-acetylglucosaminide 3-alpha-L-fucosyltransferase 9 (359 aa).

Over 1-11 (MTSTSKGILRP) the chain is Cytoplasmic. Residues 12–32 (FLIVCIILGCFMACLLIYIKP) traverse the membrane as a helical; Signal-anchor for type II membrane protein segment. At 33 to 359 (TNSWIFSPME…VGNLEKWFWN (327 aa)) the chain is on the lumenal side. N-linked (GlcNAc...) asparagine glycosylation occurs at N62. Positions 63–168 (ETTILVWVWP…RRDSDIQVPY (106 aa)) are acceptor-binding. An a beta-D-galactosyl-(1-&gt;4)-N-acetyl-beta-D-glucosaminyl derivative-binding site is contributed by Q75. 3 disulfide bridges follow: C82/C335, C91/C338, and C190/C238. N-linked (GlcNAc...) asparagine glycosylation is present at N101. An a beta-D-galactosyl-(1-&gt;4)-N-acetyl-beta-D-glucosaminyl derivative-binding site is contributed by E137. The Nucleophile role is filled by E137. E137 lines the GDP-beta-L-fucose pocket. Residue N153 is glycosylated (N-linked (GlcNAc...) asparagine). Positions 168, 192, 194, 195, 202, 226, 241, 246, 252, 255, and 256 each coordinate GDP-beta-L-fucose. Residues 169–326 (GFLTVSTNPF…NWRKDFTVNL (158 aa)) form a donor-binding region. Residues 327–359 (PRFWESHACLACDHVKRHQEYKSVGNLEKWFWN) form an acceptor-binding region.

It belongs to the glycosyltransferase 10 family. Homodimer. N-glycosylated with complex-type N-glycans. The glycan alpha-D-Man-(1-&gt;3)-beta-D-Man-(1-&gt;4)-GlcNAc-(1-&gt;4)-GlcNAc is attached at Asn-153. In terms of tissue distribution, strongly expressed in forebrain and stomach, lower expression in spleen and peripheral blood leukocytes, and no expression in small intestine, colon, liver, lung, kidney, adrenal cortex or uterus. Highly expressed in granulocytes. Not expressed in monocytes.

Its subcellular location is the golgi apparatus. It localises to the trans-Golgi network membrane. It is found in the golgi apparatus membrane. The enzyme catalyses a beta-D-galactosyl-(1-&gt;4)-N-acetyl-beta-D-glucosaminyl derivative + GDP-beta-L-fucose = a beta-D-galactosyl-(1-&gt;4)-[alpha-L-fucosyl-(1-&gt;3)]-N-acetyl-beta-D-glucosaminyl derivative + GDP + H(+). It carries out the reaction an alpha-Neu5Ac-(2-&gt;3)-beta-D-Gal-(1-&gt;4)-beta-D-GlcNAc-(1-&gt;3)-beta-D-Gal-(1-&gt;4)-beta-D-GlcNAc derivative + GDP-beta-L-fucose = an alpha-Neu5Ac-(2-&gt;3)-beta-D-Gal-(1-&gt;4)-beta-D-GlcNAc-(1-&gt;3)-beta-D-Gal-(1-&gt;4)-[alpha-L-Fuc-(1-&gt;3)]-beta-D-GlcNAc derivative + GDP + H(+). It catalyses the reaction alpha-N-glycoloylneuraminosyl-(2-&gt;3)-beta-D-galactosyl-(1-&gt;4)-N-acetyl-beta-D-glucosaminyl-(1-&gt;3)-beta-D-galactosyl-(1-&gt;4)-N-acetyl-beta-D-glucosaminyl-(1-&gt;3)-beta-D-galactosyl-(1-&gt;4)-beta-D-glucosyl-(1&lt;-&gt;1')-ceramide + GDP-beta-L-fucose = alpha-N-glycoloylneuraminosyl-(2-&gt;3)-beta-D-galactosyl-(1-&gt;4)-N-acetyl-beta-D-glucosaminyl-(1-&gt;3)-beta-D-galactosyl-(1-&gt;4)-[alpha-L-fucosyl-(1-&gt;3)]-N-acetyl-beta-D-glucosaminyl-(1-&gt;3)-beta-D-galactosyl-(1-&gt;4)-beta-D-glucosyl-(1&lt;-&gt;1')-ceramide + GDP + H(+). The catalysed reaction is alpha-D-galactosyl-(1-&gt;3)-beta-D-galactosyl-(1-&gt;4)-N-acetyl-beta-D-glucosaminyl-(1-&gt;3)-beta-D-galactosyl-(1-&gt;4)-beta-D-glucosyl-(1&lt;-&gt;1')-ceramide + GDP-beta-L-fucose = a neolactoside IV(3)-alpha-Gal,III(3)-alpha-Fuc-nLc4Cer + GDP + H(+). The enzyme catalyses a neolactoside nLc4Cer + GDP-beta-L-fucose = a neolactoside III(3)-alpha-Fuc-nLc4Cer + GDP + H(+). It carries out the reaction an N-acetyl-alpha-neuraminyl-(2-&gt;3)-beta-D-galactosyl-(1-&gt;4)-N-acetyl-beta-D-glucosaminyl derivative + GDP-beta-L-fucose = an alpha-Neu5Ac-(2-&gt;3)-beta-D-Gal-(1-&gt;4)-[alpha-L-Fuc-(1-&gt;3)]-beta-D-GlcNAc derivative + GDP + H(+). It catalyses the reaction beta-D-Gal-(1-&gt;4)-beta-D-GlcNAc-(1-&gt;3)-beta-D-Gal-(1-&gt;4)-D-Glc + GDP-beta-L-fucose = beta-D-Gal-(1-&gt;4)-[alpha-L-Fuc-(1-&gt;3)]-beta-D-GlcNAc-(1-&gt;3)-beta-D-Gal-(1-&gt;4)-D-Glc + GDP + H(+). The catalysed reaction is an alpha-L-Fuc-(1-&gt;2)-beta-D-Gal-(1-&gt;4)-beta-D-GlcNAc derivative + GDP-beta-L-fucose = an alpha-L-Fuc-(1-&gt;2)-beta-D-Gal-(1-&gt;4)-[alpha-L-Fuc-(1-&gt;3)]-beta-D-GlcNAc derivative + GDP + H(+). The protein operates within protein modification; protein glycosylation. It functions in the pathway glycolipid biosynthesis. Its activity is regulated as follows. Activated by Mn2+. Its function is as follows. Catalyzes alpha(1-&gt;3) linkage of fucosyl moiety transferred from GDP-beta-L-fucose to N-acetyl glucosamine (GlcNAc) within type 2 lactosamine (LacNAc, beta-D-Gal-(1-&gt;4)-beta-D-GlcNAc-) glycan attached to glycolipids and N- or O-linked glycoproteins. Fucosylates distal type 2 LacNAc and its fucosylated (H-type 2 LacNAc) and sialylated (sialyl-type 2 LacNAc) derivatives to form Lewis x (Lex) (CD15) and Lewis y (Ley) antigenic epitopes involved in cell adhesion and differentiation. Generates Lex epitopes in the brain, presumably playing a role in the maintenance of neuronal stemness and neurite outgrowth in progenitor neural cells. Fucosylates the internal type 2 LacNAc unit of the polylactosamine chain to form VIM-2 antigen that serves as recognition epitope for SELE. Can also modify milk oligosaccharides, in particular type 2 tetrasaccharide LNnT. In Homo sapiens (Human), this protein is 4-galactosyl-N-acetylglucosaminide 3-alpha-L-fucosyltransferase 9.